Here is a 160-residue protein sequence, read N- to C-terminus: Transcription elongation factor GreA (160 aa).

Residues L43–I75 adopt a coiled-coil conformation.

Belongs to the GreA/GreB family.

Its function is as follows. Necessary for efficient RNA polymerase transcription elongation past template-encoded arresting sites. The arresting sites in DNA have the property of trapping a certain fraction of elongating RNA polymerases that pass through, resulting in locked ternary complexes. Cleavage of the nascent transcript by cleavage factors such as GreA or GreB allows the resumption of elongation from the new 3'terminus. GreA releases sequences of 2 to 3 nucleotides. The protein is Transcription elongation factor GreA of Prosthecochloris aestuarii (strain DSM 271 / SK 413).